The sequence spans 278 residues: S-formylglutathione hydrolase YeiG (278 aa).

Active-site charge relay system residues include serine 145, aspartate 223, and histidine 256.

It belongs to the esterase D family.

It catalyses the reaction S-formylglutathione + H2O = formate + glutathione + H(+). Its function is as follows. Serine hydrolase involved in the detoxification of formaldehyde. Hydrolyzes S-formylglutathione to glutathione and formate. The sequence is that of S-formylglutathione hydrolase YeiG (yeiG) from Shigella dysenteriae serotype 1 (strain Sd197).